Reading from the N-terminus, the 97-residue chain is Co-chaperonin GroES (97 aa).

It belongs to the GroES chaperonin family. As to quaternary structure, heptamer of 7 subunits arranged in a ring. Interacts with the chaperonin GroEL.

It is found in the cytoplasm. In terms of biological role, together with the chaperonin GroEL, plays an essential role in assisting protein folding. The GroEL-GroES system forms a nano-cage that allows encapsulation of the non-native substrate proteins and provides a physical environment optimized to promote and accelerate protein folding. GroES binds to the apical surface of the GroEL ring, thereby capping the opening of the GroEL channel. The chain is Co-chaperonin GroES from Klebsiella pneumoniae (strain 342).